We begin with the raw amino-acid sequence, 291 residues long: Acetyl-coenzyme A carboxylase carboxyl transferase subunit beta (291 aa).

Residues 1-23 are disordered; sequence MSWLSKLMPSGIRTDNTPSKKRS. Positions 28–291 constitute a CoA carboxyltransferase N-terminal domain; sequence LWEKCSNCGS…LGRQPAPEVA (264 aa). C32, C35, C51, and C54 together coordinate Zn(2+). The C4-type zinc-finger motif lies at 32-54; the sequence is CSNCGSALYRPELEENLEVCPKC.

This sequence belongs to the AccD/PCCB family. In terms of assembly, acetyl-CoA carboxylase is a heterohexamer composed of biotin carboxyl carrier protein (AccB), biotin carboxylase (AccC) and two subunits each of ACCase subunit alpha (AccA) and ACCase subunit beta (AccD). Requires Zn(2+) as cofactor.

The protein resides in the cytoplasm. It catalyses the reaction N(6)-carboxybiotinyl-L-lysyl-[protein] + acetyl-CoA = N(6)-biotinyl-L-lysyl-[protein] + malonyl-CoA. It participates in lipid metabolism; malonyl-CoA biosynthesis; malonyl-CoA from acetyl-CoA: step 1/1. In terms of biological role, component of the acetyl coenzyme A carboxylase (ACC) complex. Biotin carboxylase (BC) catalyzes the carboxylation of biotin on its carrier protein (BCCP) and then the CO(2) group is transferred by the transcarboxylase to acetyl-CoA to form malonyl-CoA. The protein is Acetyl-coenzyme A carboxylase carboxyl transferase subunit beta of Stenotrophomonas maltophilia (strain K279a).